Consider the following 449-residue polypeptide: MAAQAAPELAKLDLNKNTGSAEASTVPASGSDKDDAENEGDSDDDRDDEQTGGSAEVNAEKKKKKKRPKKKKKTAKVQSVPPRIPLTTLFPNNSFPEGEIVEYLNENSYRTTNEEKRHLDRMNNDFLAEYRQAAEIHRQVRQYAQKELIKPGATLTDIAEGIEDGVRHLTGHLGLEEGDSLVAGMGFPTGLNINHCAAHYSPNAGNKVVLQHGDVMKVDFGVHVNGRIVDSAFTVAFDPVFDPLLTAVKEATNTGIKEAGIDVRMSDIGAAIQETMESYELELNGTSYPIKAIRNLNGHTIGQYEIHGGVNGKSVPIVKGGDQTKMEEGETYAIETFGSTGKGYVRDDMETSHYAKVPSAPSVPLRLTSAKNLYSLINKNFGTLPFCRRYLDRLGQEKYLLGLNNLVSSGLVDAYPPLCDVKGSYTAQFEHTILLRPNVKEVISRGDDY.

Residues 1 to 91 (MAAQAAPELA…PRIPLTTLFP (91 aa)) form a disordered region. Polar residues predominate over residues 15-28 (NKNTGSAEASTVPA). Residues 34-50 (DDAENEGDSDDDRDDEQ) show a composition bias toward acidic residues. Positions 61 to 75 (KKKKKKRPKKKKKTA) are enriched in basic residues. Histidine 199 contacts substrate. 3 residues coordinate a divalent metal cation: aspartate 219, aspartate 230, and histidine 299. Substrate is bound at residue histidine 307. A divalent metal cation contacts are provided by glutamate 335 and glutamate 430.

It belongs to the peptidase M24A family. Methionine aminopeptidase eukaryotic type 2 subfamily. Requires Co(2+) as cofactor. The cofactor is Zn(2+). Mn(2+) is required as a cofactor. It depends on Fe(2+) as a cofactor.

The protein localises to the cytoplasm. The catalysed reaction is Release of N-terminal amino acids, preferentially methionine, from peptides and arylamides.. Cotranslationally removes the N-terminal methionine from nascent proteins. The N-terminal methionine is often cleaved when the second residue in the primary sequence is small and uncharged (Met-Ala-, Cys, Gly, Pro, Ser, Thr, or Val). The protein is Methionine aminopeptidase 2-2 of Arthroderma gypseum (strain ATCC MYA-4604 / CBS 118893) (Microsporum gypseum).